Here is a 590-residue protein sequence, read N- to C-terminus: ATP-dependent lipid A-core flippase (590 aa).

6 helical membrane passes run 31-51 (IFIA…VIPK), 74-94 (AILT…GYLL), 132-152 (AVIF…ITLV), 159-179 (VALL…VSVI), 259-279 (VTAF…MIQA), and 286-306 (IGGF…LKHL). An ABC transmembrane type-1 domain is found at 33-315 (IAAILAMAVV…LTDINQPLTR (283 aa)). The ABC transporter domain maps to 347-585 (LVFERVGFRY…NGLYAGLHRI (239 aa)). Residue 381–388 (GPSGSGKT) participates in ATP binding.

It belongs to the ABC transporter superfamily. Lipid exporter (TC 3.A.1.106) family. As to quaternary structure, homodimer.

The protein resides in the cell inner membrane. It catalyses the reaction ATP + H2O + lipid A-core oligosaccharideSide 1 = ADP + phosphate + lipid A-core oligosaccharideSide 2.. Its function is as follows. Involved in lipopolysaccharide (LPS) biosynthesis. Translocates lipid A-core from the inner to the outer leaflet of the inner membrane. Transmembrane domains (TMD) form a pore in the inner membrane and the ATP-binding domain (NBD) is responsible for energy generation. This is ATP-dependent lipid A-core flippase from Cupriavidus pinatubonensis (strain JMP 134 / LMG 1197) (Cupriavidus necator (strain JMP 134)).